Consider the following 329-residue polypeptide: Phenylalanine--tRNA ligase alpha subunit (329 aa).

Glu254 serves as a coordination point for Mg(2+).

It belongs to the class-II aminoacyl-tRNA synthetase family. Phe-tRNA synthetase alpha subunit type 1 subfamily. As to quaternary structure, tetramer of two alpha and two beta subunits. Mg(2+) serves as cofactor.

The protein resides in the cytoplasm. The catalysed reaction is tRNA(Phe) + L-phenylalanine + ATP = L-phenylalanyl-tRNA(Phe) + AMP + diphosphate + H(+). This is Phenylalanine--tRNA ligase alpha subunit (pheS) from Haemophilus influenzae (strain ATCC 51907 / DSM 11121 / KW20 / Rd).